The chain runs to 398 residues: Potassium channel subfamily K member 4 (398 aa).

Residues 1 to 3 (MRS) are Cytoplasmic-facing. Residues 4–24 (TTLLALLALVLLYLVSGALVF) form a helical membrane-spanning segment. Topologically, residues 25–88 (QALEQPHEQQ…WTNSSNHSSA (64 aa)) are extracellular. N-linked (GlcNAc...) asparagine glycosylation is found at Asn-81 and Asn-84. Residues 89–103 (WNLGSAFFFSGTIIT) constitute an intramembrane region (helical). Residues Thr-104, Ile-105, Gly-106, and Tyr-107 each coordinate K(+). The segment at 104–109 (TIGYGN) is selectivity filter 1. Residues 104–110 (TIGYGNI) lie within the membrane without spanning it. Residues 111 to 118 (VLHTDAGR) are Extracellular-facing. A helical membrane pass occupies residues 119 to 151 (LFCIFYALVGIPLFGMLLAGVGDRLGSSLRRGI). At 152–173 (GHIEAIFLKWHVPPGLVRSLSA) the chain is on the cytoplasmic side. Residues 174–195 (VLFLLIGCLLFVLTPTFVFSYM) form a helical membrane-spanning segment. Residues 196 to 200 (ESWSK) are Extracellular-facing. An intramembrane region (helical) is located at residues 201 to 214 (LEAIYFVIVTLTTV). K(+) is bound by residues Thr-213, Val-214, Gly-215, and Phe-216. Residues 213 to 218 (TVGFGD) are selectivity filter 2. The stretch at 215–220 (GFGDYV) is an intramembrane region. Residues 221–234 (PGDGTGQNSPAYQP) are Extracellular-facing. A helical membrane pass occupies residues 235–261 (LVWFWILFGLAYFASVLTTIGNWLRAV). The Cytoplasmic segment spans residues 262–398 (SRRTRAEMGG…GRLRDKAVPV (137 aa)). Positions 282–292 (TVTARVTQRTG) are enriched in polar residues. The interval 282-398 (TVTARVTQRT…GRLRDKAVPV (117 aa)) is disordered. Positions 370 to 389 (PRGRRRPNPSKKPSRPRGPG) are enriched in basic residues.

The protein belongs to the two pore domain potassium channel (TC 1.A.1.8) family. As to quaternary structure, homodimer; disulfide-linked. Forms heterodimers with other 2-pore domain K(+) channel subunits, such as KCNK2 and KCNK10. Post-translationally, N-glycosylated. In terms of tissue distribution, expressed in brain, spinal cord and eye. Not detected in heart, skeletal muscle, liver, lungs, kidney and testis.

It localises to the cell membrane. The protein localises to the cell projection. It is found in the axon. The enzyme catalyses K(+)(in) = K(+)(out). It carries out the reaction Rb(+)(in) = Rb(+)(out). The catalysed reaction is Cs(+)(in) = Cs(+)(out). Activated by arachidonic acid and other polyunsaturated fatty acids. Not affected by volatile general anesthetics such as chloroform, diethyl ether, halothane and isoflurane. Activated at intracellular and extracellular basic pHs. In terms of biological role, k(+) channel that conducts voltage-dependent outward rectifying currents upon membrane depolarization. Voltage sensing is coupled to K(+) electrochemical gradient in an 'ion flux gating' mode where outward but not inward ion flow opens the gate. Converts to voltage-independent 'leak' conductance mode upon stimulation by various stimuli including mechanical membrane stretch, basic pH, temperature and lipids. Homo- and heterodimerizes to form functional channels with distinct regulatory and gating properties. At trigeminal A-beta afferent nerves, the heterodimer of KCNK2/TREK-1 and KCNK4/TRAAK is mostly coexpressed at nodes of Ranvier where it conducts voltage-independent mechanosensitive and thermosensitive currents, allowing rapid action potential repolarization, high speed and high frequence saltatory conduction on myelinated nerves to ensure prompt sensory responses. Permeable to other monovalent cations such as Rb(+) and Cs(+). This is Potassium channel subfamily K member 4 from Mus musculus (Mouse).